Consider the following 274-residue polypeptide: Large ribosomal subunit protein uL2 (274 aa).

The disordered stretch occupies residues 222-274 (GVAMNPVDHPHGGGEGRGKGHHPQSPWGQLAKGYKTRRGKKASDKLIVRRRNG). Over residues 229–239 (DHPHGGGEGRG) the composition is skewed to basic and acidic residues.

It belongs to the universal ribosomal protein uL2 family. Part of the 50S ribosomal subunit. Forms a bridge to the 30S subunit in the 70S ribosome.

Functionally, one of the primary rRNA binding proteins. Required for association of the 30S and 50S subunits to form the 70S ribosome, for tRNA binding and peptide bond formation. It has been suggested to have peptidyltransferase activity; this is somewhat controversial. Makes several contacts with the 16S rRNA in the 70S ribosome. The chain is Large ribosomal subunit protein uL2 from Thermosipho melanesiensis (strain DSM 12029 / CIP 104789 / BI429).